Reading from the N-terminus, the 95-residue chain is Small ribosomal subunit protein uS19 (95 aa).

The disordered stretch occupies residues 73–95 (EFSPTRTYRGHGADKNAKGSKKK).

The protein belongs to the universal ribosomal protein uS19 family.

Protein S19 forms a complex with S13 that binds strongly to the 16S ribosomal RNA. The protein is Small ribosomal subunit protein uS19 of Deinococcus radiodurans (strain ATCC 13939 / DSM 20539 / JCM 16871 / CCUG 27074 / LMG 4051 / NBRC 15346 / NCIMB 9279 / VKM B-1422 / R1).